Here is a 252-residue protein sequence, read N- to C-terminus: 3-dehydroquinate dehydratase (252 aa).

Residues Ser-21, 46–48 (EWR), and Arg-82 contribute to the 3-dehydroquinate site. The active-site Proton donor/acceptor is His-143. Lys-170 serves as the catalytic Schiff-base intermediate with substrate. Positions 213, 232, and 236 each coordinate 3-dehydroquinate.

The protein belongs to the type-I 3-dehydroquinase family. Homodimer.

The enzyme catalyses 3-dehydroquinate = 3-dehydroshikimate + H2O. The protein operates within metabolic intermediate biosynthesis; chorismate biosynthesis; chorismate from D-erythrose 4-phosphate and phosphoenolpyruvate: step 3/7. In terms of biological role, involved in the third step of the chorismate pathway, which leads to the biosynthesis of aromatic amino acids. Catalyzes the cis-dehydration of 3-dehydroquinate (DHQ) and introduces the first double bond of the aromatic ring to yield 3-dehydroshikimate. The protein is 3-dehydroquinate dehydratase of Shigella boydii serotype 4 (strain Sb227).